The following is a 205-amino-acid chain: Small ribosomal subunit protein uS4 (205 aa).

Positions 19 to 45 (IWGRPKSPVNRREYGPGQHGQRRKGKL) are disordered. In terms of domain architecture, S4 RNA-binding spans 94–157 (SRLDAVVYRA…KQLAIVLEAV (64 aa)).

The protein belongs to the universal ribosomal protein uS4 family. As to quaternary structure, part of the 30S ribosomal subunit. Contacts protein S5. The interaction surface between S4 and S5 is involved in control of translational fidelity.

Functionally, one of the primary rRNA binding proteins, it binds directly to 16S rRNA where it nucleates assembly of the body of the 30S subunit. Its function is as follows. With S5 and S12 plays an important role in translational accuracy. This is Small ribosomal subunit protein uS4 from Brucella melitensis biotype 2 (strain ATCC 23457).